The primary structure comprises 337 residues: UPF0284 protein AF_0276 (337 aa).

Belongs to the UPF0284 family.

In Archaeoglobus fulgidus (strain ATCC 49558 / DSM 4304 / JCM 9628 / NBRC 100126 / VC-16), this protein is UPF0284 protein AF_0276.